The following is a 529-amino-acid chain: Peptide chain release factor 3 (529 aa).

A tr-type G domain is found at Ala11–Met280. Residues Ser20–Thr27, Asp88–His92, and Asn142–Asp145 contribute to the GTP site.

Belongs to the TRAFAC class translation factor GTPase superfamily. Classic translation factor GTPase family. PrfC subfamily.

Its subcellular location is the cytoplasm. Increases the formation of ribosomal termination complexes and stimulates activities of RF-1 and RF-2. It binds guanine nucleotides and has strong preference for UGA stop codons. It may interact directly with the ribosome. The stimulation of RF-1 and RF-2 is significantly reduced by GTP and GDP, but not by GMP. In Shigella dysenteriae serotype 1 (strain Sd197), this protein is Peptide chain release factor 3.